The following is a 161-amino-acid chain: Phosphopantetheine adenylyltransferase (161 aa).

Thr9 is a binding site for substrate. Residues 9–10 and His17 each bind ATP; that span reads TF. Residues Lys41, Leu73, and Arg87 each contribute to the substrate site. ATP-binding positions include 88-90, Glu98, and 123-129; these read GLR and YSFISST.

This sequence belongs to the bacterial CoaD family. Homohexamer. It depends on Mg(2+) as a cofactor.

It is found in the cytoplasm. It carries out the reaction (R)-4'-phosphopantetheine + ATP + H(+) = 3'-dephospho-CoA + diphosphate. It participates in cofactor biosynthesis; coenzyme A biosynthesis; CoA from (R)-pantothenate: step 4/5. Functionally, reversibly transfers an adenylyl group from ATP to 4'-phosphopantetheine, yielding dephospho-CoA (dPCoA) and pyrophosphate. In Pseudomonas putida (strain ATCC 47054 / DSM 6125 / CFBP 8728 / NCIMB 11950 / KT2440), this protein is Phosphopantetheine adenylyltransferase.